Consider the following 251-residue polypeptide: Pyruvate formate-lyase-activating enzyme (251 aa).

A Radical SAM core domain is found at 15–244; sequence VDGPGLRYIL…KEAYRYVNFN (230 aa). Cys-29, Cys-33, and Cys-36 together coordinate [4Fe-4S] cluster. S-adenosyl-L-methionine-binding positions include 35–37, Gly-79, 134–136, and His-207; these read YCH and DIK.

Belongs to the organic radical-activating enzymes family. [4Fe-4S] cluster is required as a cofactor.

It localises to the cytoplasm. The catalysed reaction is glycyl-[formate C-acetyltransferase] + reduced [flavodoxin] + S-adenosyl-L-methionine = glycin-2-yl radical-[formate C-acetyltransferase] + semiquinone [flavodoxin] + 5'-deoxyadenosine + L-methionine + H(+). Activation of pyruvate formate-lyase under anaerobic conditions by generation of an organic free radical, using S-adenosylmethionine and reduced flavodoxin as cosubstrates to produce 5'-deoxy-adenosine. The polypeptide is Pyruvate formate-lyase-activating enzyme (pflA) (Staphylococcus epidermidis (strain ATCC 12228 / FDA PCI 1200)).